The chain runs to 782 residues: General transcription and DNA repair factor IIH helicase/translocase subunit XPB (782 aa).

Residues 1–11 show a composition bias toward basic and acidic residues; the sequence is MGKRDRADRDK. Disordered regions lie at residues 1 to 51 and 218 to 241; these read MGKR…ESGT and SAISKTAESSGGPSTSRVTDPQGK. The Nuclear localization signal motif lies at 6–18; that stretch reads RADRDKKKSRKRH. Over residues 21-30 the composition is skewed to acidic residues; the sequence is DEEDDEEDAP. Residues 218–236 show a composition bias toward polar residues; sequence SAISKTAESSGGPSTSRVT. One can recognise a Helicase ATP-binding domain in the interval 327–488; the sequence is MFGNGRARSG…DLNFLIGPKL (162 aa). 340-347 contacts ATP; it reads LPCGAGKS. The DEVH box signature appears at 441 to 444; sequence DEVH. The region spanning 542-702 is the Helicase C-terminal domain; it reads RACQFLIKFH…LAGMEEEDLA (161 aa). The ATP site is built by R642 and R645. Position 686 is a phosphoserine (S686). Residue S751 is modified to Phosphoserine; by CK2.

This sequence belongs to the helicase family. RAD25/XPB subfamily. Component of the 7-subunit TFIIH core complex composed of XPB/ERCC3, XPD/ERCC2, GTF2H1, GTF2H2, GTF2H3, GTF2H4 and GTF2H5, which is active in NER. The core complex associates with the 3-subunit CDK-activating kinase (CAK) module composed of CCNH/cyclin H, CDK7 and MNAT1 to form the 10-subunit holoenzyme (holo-TFIIH) active in transcription. Interacts with PUF60. Interacts with ATF7IP. Interacts with KAT2A; leading to KAT2A recruitment to promoters and acetylation of histones. Part of TBP-based Pol II pre-initiation complex (PIC), in which Pol II core assembles with general transcription factors and other specific initiation factors including GTF2E1, GTF2E2, GTF2F1, GTF2F2, TCEA1, ERCC2, ERCC3, GTF2H2, GTF2H3, GTF2H4, GTF2H5, GTF2A1, GTF2A2, GTF2B and TBP; this large multi-subunit PIC complex mediates DNA unwinding and targets Pol II core to the transcription start site where the first phosphodiester bond forms. In terms of assembly, (Microbial infection) Interacts with Epstein-Barr virus EBNA2. Phosphorylation on Ser-751 by CK2 controls the 5'-excision activity of ERCC1-XPF endonuclease; phosphorylated protein inhibits the excision activity and thus NER. Dephosphorylation reactivates the 5'-excision step. Phosphorylation has no effect on transcription or the 3'-5' helicase activity.

It is found in the nucleus. It catalyses the reaction Couples ATP hydrolysis with the unwinding of duplex DNA by translocating in the 3'-5' direction.. The catalysed reaction is ATP + H2O = ADP + phosphate + H(+). With respect to regulation, phosphorylation on Ser-751 by CK2 controls the 5'-excision activity of ERCC1-XPF endonuclease; phosphorylated protein inhibits the excision activity and thus NER. ATPase activity is stimulated by TFIIH subunit p52 (GTF2H4). DNA translocase activity by this subunit in TFIIH is stimulated by XPA, ERCC5/XPG and XFP plus ERCC1; translocase activity is sensitive to triptolide which targets this enzyme. In terms of biological role, ATP-dependent 3'-5' DNA helicase/translocase. Binds dsDNA rather than ssDNA, unzipping it in a translocase rather than classical helicase activity. Component of the general transcription and DNA repair factor IIH (TFIIH) core complex. When complexed to CDK-activating kinase (CAK), involved in RNA transcription by RNA polymerase II. The ATPase activity of XPB/ERCC3, but not its helicase activity, is required for DNA opening; it may wrap around the damaged DNA wedging it open, causing localized melting that allows XPD/ERCC2 helicase to anchor. In transcription, TFIIH has an essential role in transcription initiation. When the pre-initiation complex (PIC) has been established, TFIIH is required for promoter opening and promoter escape. The ATP-dependent helicase activity of XPB/ERCC3 is required for promoter opening and promoter escape. In transcription pre-initiation complexes induces and propagates a DNA twist to open DNA. Also involved in transcription-coupled nucleotide excision repair (NER) of damaged DNA. In NER, TFIIH acts by opening DNA around the lesion to allow the excision of the damaged oligonucleotide and its replacement by a new DNA fragment. The structure of the TFIIH transcription complex differs from the NER-TFIIH complex; large movements by XPD/ERCC2 and XPB/ERCC3 are stabilized by XPA. XPA retains XPB/ERCC3 at the 5' end of a DNA bubble (mimicking DNA damage). This is General transcription and DNA repair factor IIH helicase/translocase subunit XPB from Homo sapiens (Human).